Here is a 253-residue protein sequence, read N- to C-terminus: Light-harvesting complex stress-related protein 1, chloroplastic (253 aa).

Residues 1-39 (MAMMMRKAAAVPASSRRSVAVNSVSGKRTVSGKAGAPVP) constitute a chloroplast transit peptide. Tyr45 is a binding site for chlorophyll b. Residues Phe60, Glu81, and His84 each contribute to the chlorophyll a site. Arg86 contributes to the chlorophyll b binding site. A helical transmembrane segment spans residues 87–107 (VAMLAALGFIVGEQLQDFPLF). Gln124 serves as a coordination point for chlorophyll a. The helical transmembrane segment at 131-151 (EPLLIAIGVAESYRVAVGWAT) threads the bilayer. The chlorophyll b site is built by Glu141 and Arg144. Positions 190, 191, 194, 196, and 208 each coordinate chlorophyll a. Residues 197-217 (LAMIAIAAFVAQELVEQTEIF) traverse the membrane as a helical segment.

The protein belongs to the light-harvesting chlorophyll a/b-binding (LHC) protein family.

Its subcellular location is the plastid. It is found in the chloroplast thylakoid membrane. In terms of biological role, required for non-photochemical quenching (NPQ), a mechanism that converts and dissipates the harmful excess absorbed light energy into heat and protect the photosynthetic apparatus from photo-oxidative damage. Is able to sense luminal acidification of the thylakoid membranes, which occurs along with elevated electron flow caused by excess light, and to induce a large, fast, and reversible pH-dependent quenching in LHCII-containing membranes. Mediates excitation energy transfer from light-harvesting complex II (LHCII) to photosystem I (PSI), rather than photosystem II (PSII), at low pH, which mimics the acidified lumen of the thylakoid membranes in high light-exposed chloroplasts. Activates PSI-dependent fluorescence quenching in addition to dissipating excitation energy in LHCII to avoid photooxidative stress under excess light. This Chlamydomonas reinhardtii (Chlamydomonas smithii) protein is Light-harvesting complex stress-related protein 1, chloroplastic.